Here is a 165-residue protein sequence, read N- to C-terminus: Chorismate pyruvate-lyase (165 aa).

Positions 35, 77, 115, and 156 each coordinate substrate.

The protein belongs to the UbiC family. In terms of assembly, monomer.

The protein localises to the cytoplasm. It catalyses the reaction chorismate = 4-hydroxybenzoate + pyruvate. It participates in cofactor biosynthesis; ubiquinone biosynthesis. Its function is as follows. Removes the pyruvyl group from chorismate, with concomitant aromatization of the ring, to provide 4-hydroxybenzoate (4HB) for the ubiquinone pathway. The sequence is that of Chorismate pyruvate-lyase from Salmonella schwarzengrund (strain CVM19633).